Consider the following 596-residue polypeptide: Alkaline phosphatase 4 (596 aa).

The signal sequence occupies residues M1–A20. D93 is a binding site for Mg(2+). Residue D93 participates in Zn(2+) binding. The active-site Phosphoserine intermediate is the S144. Mg(2+)-binding residues include H202 and T204. N-linked (GlcNAc...) asparagine glycosylation is found at N262 and N297. Residue E369 coordinates Mg(2+). Residues D374 and H378 each contribute to the Zn(2+) site. N401 carries N-linked (GlcNAc...) asparagine glycosylation. Residues D415 and H416 each contribute to the Zn(2+) site. N464 and N470 each carry an N-linked (GlcNAc...) asparagine glycan. H504 lines the Zn(2+) pocket. C539 and C550 form a disulfide bridge. A compositionally biased stretch (basic and acidic residues) spans D548–N566. The segment at D548–N570 is disordered. N570 carries GPI-anchor amidated asparagine lipidation. The helical transmembrane segment at G571–L591 threads the bilayer. Positions G571 to L596 are cleaved as a propeptide — removed in mature form.

This sequence belongs to the alkaline phosphatase family. As to quaternary structure, homodimer. Requires Mg(2+) as cofactor. The cofactor is Zn(2+). Ellipsoid body ring neurons in the adult brain and in the lower Malpighian tubule and ureter.

It localises to the cell membrane. The catalysed reaction is a phosphate monoester + H2O = an alcohol + phosphate. Its function is as follows. Important role in neural and renal epithelial function. In Drosophila melanogaster (Fruit fly), this protein is Alkaline phosphatase 4.